The chain runs to 351 residues: Heat-inducible transcription repressor HrcA (351 aa).

This sequence belongs to the HrcA family.

Functionally, negative regulator of class I heat shock genes (grpE-dnaK-dnaJ and groELS operons). Prevents heat-shock induction of these operons. The polypeptide is Heat-inducible transcription repressor HrcA (Clostridium tetani (strain Massachusetts / E88)).